The sequence spans 327 residues: Transaldolase (327 aa).

The active-site Schiff-base intermediate with substrate is the K132.

It belongs to the transaldolase family. Type 1 subfamily. As to quaternary structure, homodimer.

It localises to the cytoplasm. The catalysed reaction is D-sedoheptulose 7-phosphate + D-glyceraldehyde 3-phosphate = D-erythrose 4-phosphate + beta-D-fructose 6-phosphate. Its pathway is carbohydrate degradation; pentose phosphate pathway; D-glyceraldehyde 3-phosphate and beta-D-fructose 6-phosphate from D-ribose 5-phosphate and D-xylulose 5-phosphate (non-oxidative stage): step 2/3. Transaldolase is important for the balance of metabolites in the pentose-phosphate pathway. In Chlamydia caviae (strain ATCC VR-813 / DSM 19441 / 03DC25 / GPIC) (Chlamydophila caviae), this protein is Transaldolase.